A 333-amino-acid polypeptide reads, in one-letter code: Adenosine deaminase (333 aa).

Zn(2+) is bound by residues H12 and H14. Positions 14, 16, and 170 each coordinate substrate. Zn(2+) is bound at residue H197. Residue E200 is the Proton donor of the active site. Residue D278 coordinates Zn(2+). A substrate-binding site is contributed by D279.

The protein belongs to the metallo-dependent hydrolases superfamily. Adenosine and AMP deaminases family. Adenosine deaminase subfamily. Zn(2+) is required as a cofactor.

The enzyme catalyses adenosine + H2O + H(+) = inosine + NH4(+). It catalyses the reaction 2'-deoxyadenosine + H2O + H(+) = 2'-deoxyinosine + NH4(+). Functionally, catalyzes the hydrolytic deamination of adenosine and 2-deoxyadenosine. The sequence is that of Adenosine deaminase from Aliivibrio fischeri (strain MJ11) (Vibrio fischeri).